The primary structure comprises 467 residues: 3-isopropylmalate dehydratase large subunit (467 aa).

3 residues coordinate [4Fe-4S] cluster: Cys-347, Cys-407, and Cys-410.

The protein belongs to the aconitase/IPM isomerase family. LeuC type 1 subfamily. As to quaternary structure, heterodimer of LeuC and LeuD. [4Fe-4S] cluster is required as a cofactor.

The enzyme catalyses (2R,3S)-3-isopropylmalate = (2S)-2-isopropylmalate. The protein operates within amino-acid biosynthesis; L-leucine biosynthesis; L-leucine from 3-methyl-2-oxobutanoate: step 2/4. Functionally, catalyzes the isomerization between 2-isopropylmalate and 3-isopropylmalate, via the formation of 2-isopropylmaleate. The polypeptide is 3-isopropylmalate dehydratase large subunit (Pelagibacter ubique (strain HTCC1062)).